A 226-amino-acid chain; its full sequence is ATP-dependent Clp protease proteolytic subunit 4 (226 aa).

Residue Ser122 is the Nucleophile of the active site. His147 is a catalytic residue.

This sequence belongs to the peptidase S14 family. In terms of assembly, fourteen ClpP subunits assemble into 2 heptameric rings which stack back to back to give a disk-like structure with a central cavity, resembling the structure of eukaryotic proteasomes.

It is found in the cytoplasm. It carries out the reaction Hydrolysis of proteins to small peptides in the presence of ATP and magnesium. alpha-casein is the usual test substrate. In the absence of ATP, only oligopeptides shorter than five residues are hydrolyzed (such as succinyl-Leu-Tyr-|-NHMec, and Leu-Tyr-Leu-|-Tyr-Trp, in which cleavage of the -Tyr-|-Leu- and -Tyr-|-Trp bonds also occurs).. In terms of biological role, cleaves peptides in various proteins in a process that requires ATP hydrolysis. Has a chymotrypsin-like activity. Plays a major role in the degradation of misfolded proteins. The sequence is that of ATP-dependent Clp protease proteolytic subunit 4 from Streptomyces avermitilis (strain ATCC 31267 / DSM 46492 / JCM 5070 / NBRC 14893 / NCIMB 12804 / NRRL 8165 / MA-4680).